Consider the following 99-residue polypeptide: UPF0125 protein BU253 (99 aa).

This sequence belongs to the UPF0125 (RnfH) family.

The sequence is that of UPF0125 protein BU253 from Buchnera aphidicola subsp. Acyrthosiphon pisum (strain APS) (Acyrthosiphon pisum symbiotic bacterium).